Here is a 101-residue protein sequence, read N- to C-terminus: Small ribosomal subunit protein uS14 (101 aa).

Residues 51–72 (LPRDSSPSRQRNPCRQTGRPHG) form a disordered region. The segment covering 52-65 (PRDSSPSRQRNPCR) has biased composition (polar residues).

Belongs to the universal ribosomal protein uS14 family. In terms of assembly, part of the 30S ribosomal subunit. Contacts proteins S3 and S10.

Its function is as follows. Binds 16S rRNA, required for the assembly of 30S particles and may also be responsible for determining the conformation of the 16S rRNA at the A site. In Buchnera aphidicola subsp. Acyrthosiphon kondoi (Acyrthosiphon kondoi symbiotic bacterium), this protein is Small ribosomal subunit protein uS14.